The chain runs to 272 residues: Proteasome subunit beta (272 aa).

A propeptide spans 1–47 (removed in mature form; by autocatalysis); sequence MSTGGDRLPEAFLRPGSSSFVEFLREVAPQSHPEHARPAGAGDVVHA. Threonine 48 serves as the catalytic Nucleophile.

The protein belongs to the peptidase T1B family. As to quaternary structure, the 20S proteasome core is composed of 14 alpha and 14 beta subunits that assemble into four stacked heptameric rings, resulting in a barrel-shaped structure. The two inner rings, each composed of seven catalytic beta subunits, are sandwiched by two outer rings, each composed of seven alpha subunits. The catalytic chamber with the active sites is on the inside of the barrel. Has a gated structure, the ends of the cylinder being occluded by the N-termini of the alpha-subunits. Is capped by the proteasome-associated ATPase, ARC.

It localises to the cytoplasm. The enzyme catalyses Cleavage of peptide bonds with very broad specificity.. Its pathway is protein degradation; proteasomal Pup-dependent pathway. Its activity is regulated as follows. The formation of the proteasomal ATPase ARC-20S proteasome complex, likely via the docking of the C-termini of ARC into the intersubunit pockets in the alpha-rings, may trigger opening of the gate for substrate entry. Interconversion between the open-gate and close-gate conformations leads to a dynamic regulation of the 20S proteasome proteolysis activity. Functionally, component of the proteasome core, a large protease complex with broad specificity involved in protein degradation. The chain is Proteasome subunit beta from Beutenbergia cavernae (strain ATCC BAA-8 / DSM 12333 / CCUG 43141 / JCM 11478 / NBRC 16432 / NCIMB 13614 / HKI 0122).